The chain runs to 315 residues: Acetyl-coenzyme A carboxylase carboxyl transferase subunit alpha (315 aa).

One can recognise a CoA carboxyltransferase C-terminal domain in the interval 40–293; the sequence is LEDKKIALTK…KKNVLAALDR (254 aa).

This sequence belongs to the AccA family. In terms of assembly, acetyl-CoA carboxylase is a heterohexamer composed of biotin carboxyl carrier protein (AccB), biotin carboxylase (AccC) and two subunits each of ACCase subunit alpha (AccA) and ACCase subunit beta (AccD).

It localises to the cytoplasm. It catalyses the reaction N(6)-carboxybiotinyl-L-lysyl-[protein] + acetyl-CoA = N(6)-biotinyl-L-lysyl-[protein] + malonyl-CoA. The protein operates within lipid metabolism; malonyl-CoA biosynthesis; malonyl-CoA from acetyl-CoA: step 1/1. Functionally, component of the acetyl coenzyme A carboxylase (ACC) complex. First, biotin carboxylase catalyzes the carboxylation of biotin on its carrier protein (BCCP) and then the CO(2) group is transferred by the carboxyltransferase to acetyl-CoA to form malonyl-CoA. The chain is Acetyl-coenzyme A carboxylase carboxyl transferase subunit alpha from Marinomonas sp. (strain MWYL1).